The following is a 669-amino-acid chain: MKIFVGNVDGADTTPEELAALFAPYGTVMSCAVMKQFAFVHMRENAGALRAIEALHGHELRPGRALVVEMSRPRPLNTWKIFVGNVSAACTSQELRSLFERRGRVIECDVVKDYAFVHMEKEADAKAAIAQLNGKEVKGKRINVELSTKGQKKGPGLAVQSGDKTKKPGAGDTAFPGTGGFSATFDYQQAFGNSTGGFDGQARQPTPPFFGRDRSPLRRSPPRASYVAPLTAQPATYRAQPSVSLGAAYRAQPSASLGVGYRTQPMTAQAASYRAQPSVSLGAPYRGQLASPSSQSAAASSLGPYGGAQPSASALSSYGGQAAAASSLNSYGAQGSSLASYGNQPSSYGAQAASSYGVRAAASSYNTQGAASSLGSYGAQAASYGAQSAASSLAYGAQAASYNAQPSASYNAQSAPYAAQQAASYSSQPAAYVAQPATAAAYASQPAAYAAQATTPMAGSYGAQPVVQTQLNSYGAQASMGLSGSYGAQSAAAATGSYGAAAAYGAQPSATLAAPYRTQSSASLAASYAAQQHPQAAASYRGQPGNAYDGAGQPSAAYLSMSQGAVANANSTPPPYERTRLSPPRASYDDPYKKAVAMSKRYGSDRRLAELSDYRRLSESQLSFRRSPTKSSLDYRRLPDAHSDYARYSGSYNDYLRAAQMHSGYQRRM.

RRM domains are found at residues 1–73 (MKIF…MSRP) and 79–149 (WKIF…LSTK). Residues K126, K135, K138, K149, and K153 each participate in a glycyl lysine isopeptide (Lys-Gly) (interchain with G-Cter in SUMO2) cross-link. Disordered stretches follow at residues 147–175 (STKG…DTAF) and 193–232 (NSTG…PLTA). S161 is subject to Phosphoserine. K164 is modified (N6-acetyllysine; alternate). Residue K164 forms a Glycyl lysine isopeptide (Lys-Gly) (interchain with G-Cter in SUMO2); alternate linkage. T206 bears the Phosphothreonine mark. Residues S220, S242, S244, S256, S272, and S280 each carry the phosphoserine modification. Residues 284-303 (PYRGQLASPSSQSAAASSLG) are disordered. Residues 287–303 (GQLASPSSQSAAASSLG) are compositionally biased toward low complexity. A TRBP-interacting domain; interaction with STIL region spans residues 307-354 (GAQPSASALSSYGGQAAAASSLNSYGAQGSSLASYGNQPSSYGAQAAS). A phosphoserine mark is found at S520, S523, S527, and S562. The segment at 566 to 590 (VANANSTPPPYERTRLSPPRASYDD) is disordered. The residue at position 572 (T572) is a Phosphothreonine. A Phosphoserine modification is found at S582. K600 is covalently cross-linked (Glycyl lysine isopeptide (Lys-Gly) (interchain with G-Cter in SUMO2)). 6 positions are modified to phosphoserine: S618, S620, S623, S627, S643, and S649.

Isoform 1: Interacts with NCOA6, CITED1 and XRCC5/KU86. Isoform 1: Interacts with SS18 isoform 1. Isoform 1: Interacts with SS18 isoform 2. Interacts with STIL and interferes with its interaction with CPAP. Interacts with gamma-tubulin. Part of the HDP-RNP complex composed of at least HEXIM1, PRKDC, XRCC5, XRCC6, paraspeckle proteins (SFPQ, NONO, PSPC1, RBM14, and MATR3) and NEAT1 RNA. Interacts with RBPMS; the interaction allows cooperative assembly of RNA-bound stable cell-specific alternative splicing regulatory complexes. Expressed in all tissues tested, including brain, heart, skeletal muscle, colon, thymus, spleen, kidney, liver, small intestine, placenta, lung and peripheral blood lymphocytes.

The protein localises to the nucleus. The protein resides in the nucleolus. Its subcellular location is the cytoplasm. Isoform 1 may function as a nuclear receptor coactivator, enhancing transcription through other coactivators such as NCOA6 and CITED1. Isoform 2, functions as a transcriptional repressor, modulating transcriptional activities of coactivators including isoform 1, NCOA6 and CITED1. Regulates centriole biogenesis by suppressing the formation of aberrant centriolar protein complexes in the cytoplasm and thus preserving mitotic spindle integrity. Prevents the formation of the STIL-CPAP complex (which can induce the formation of aberrant centriolar protein complexes) by interfering with the interaction of STIL with CPAP. Plays a role in the regulation of DNA virus-mediated innate immune response by assembling into the HDP-RNP complex, a complex that serves as a platform for IRF3 phosphorylation and subsequent innate immune response activation through the cGAS-STING pathway. Also involved in the regulation of pre-mRNA alternative splicing. The polypeptide is RNA-binding protein 14 (RBM14) (Homo sapiens (Human)).